We begin with the raw amino-acid sequence, 1311 residues long: Nephrocystin-3 (1311 aa).

Positions 81–183 (SKNNEIASMQ…LQRLQAQGIQ (103 aa)) form a coiled coil. 9 TPR repeats span residues 889–923 (LSYW…EEKM), 927–960 (ADLY…RETA), 969–1002 (AQSL…SENA), 1011–1044 (AREL…RQKS), 1077–1110 (ARTL…RERV), 1119–1152 (AQSI…RRRA), 1161–1194 (AYTV…RQKS), 1203–1236 (ATAL…YEDS), and 1245–1278 (GETL…KETE).

The protein resides in the cell projection. The protein localises to the cilium. Required for normal ciliary development and function. Inhibits disheveled-1-induced canonical Wnt-signaling activity and may also play a role in the control of non-canonical Wnt signaling that regulates planar cell polarity. Probably acts as a molecular switch between different Wnt signaling pathways. Required for proper convergent extension cell movements. The sequence is that of Nephrocystin-3 (nphp3) from Xenopus tropicalis (Western clawed frog).